We begin with the raw amino-acid sequence, 488 residues long: Bifunctional protein NifU/MnmA (488 aa).

A nifU-like protein region spans residues 1–130 (MPERYGPRVI…DYWSRQGDAL (130 aa)). The segment at 143 to 488 (RRGVVAAMSG…GGGIIARRDA (346 aa)) is tRNA-specific 2-thiouridylase MnmA. Residues 149 to 156 (AMSGGVDS) and Phe175 contribute to the ATP site. Cys240 (nucleophile) is an active-site residue. Cys240 and Cys333 form a disulfide bridge. Gly264 contacts ATP. Residues 283 to 285 (KDQ) are interaction with tRNA. The Cysteine persulfide intermediate role is filled by Cys333. Residues 433-434 (RY) form an interaction with tRNA region.

The protein in the N-terminal section; belongs to the NifU family. This sequence in the C-terminal section; belongs to the MnmA/TRMU family.

It localises to the cytoplasm. It catalyses the reaction S-sulfanyl-L-cysteinyl-[protein] + uridine(34) in tRNA + AH2 + ATP = 2-thiouridine(34) in tRNA + L-cysteinyl-[protein] + A + AMP + diphosphate + H(+). Its function is as follows. May be involved in the formation or repair of [Fe-S] clusters present in iron-sulfur proteins. Catalyzes the 2-thiolation of uridine at the wobble position (U34) of tRNA, leading to the formation of s(2)U34. This Rubrobacter xylanophilus (strain DSM 9941 / JCM 11954 / NBRC 16129 / PRD-1) protein is Bifunctional protein NifU/MnmA (nifU/mnmA).